A 333-amino-acid chain; its full sequence is Eukaryotic translation initiation factor 2 subunit 2 (333 aa).

Disordered regions lie at residues 1–87 (MSGD…KSKK), 98–117 (IKDL…EEDL), and 141–165 (EKDE…QTGP). Ser2 carries the post-translational modification N-acetylserine. A phosphoserine mark is found at Ser2 and Ser13. Residues 13 to 22 (SKKKKKKKKP) are compositionally biased toward basic residues. A Phosphothreonine modification is found at Thr36. Residues 40 to 51 (ETKEVEPEPTED) show a composition bias toward basic and acidic residues. Ser67 is subject to Phosphoserine. Lys102 participates in a covalent cross-link: Glycyl lysine isopeptide (Lys-Gly) (interchain with G-Cter in SUMO2). Ser105 carries the post-translational modification Phosphoserine. The span at 106–117 (DVQEPAEPEEDL) shows a compositional bias: acidic residues. Residues Ser158 and Ser218 each carry the phosphoserine modification. Residues Lys265 and Lys293 each carry the N6-acetyllysine modification. A C4-type zinc finger spans residues 281–305 (CHTCRSPDTILQKDTRLYFLQCETC).

The protein belongs to the eIF-2-beta/eIF-5 family. As to quaternary structure, eukaryotic translation initiation factor 2 eIF2 is a heterotrimeric complex composed of an alpha (EIF2S1), a beta (EIF2S2) and a gamma (EIF2S3) chain. eIF2 is member of the 43S pre-initiation complex (43S PIC). eIF2 forms a complex with at least CELF1/CUGBP1, CALR, CALR3, EIF2S1, EIF2S2, HSP90B1 and HSPA5. Interacts with BZW2/5MP1. Interacts with EIF5.

The protein localises to the cytoplasm. Its subcellular location is the cytosol. Component of the eIF2 complex that functions in the early steps of protein synthesis by forming a ternary complex with GTP and initiator tRNA. This complex binds to a 40S ribosomal subunit, followed by mRNA binding to form a 43S pre-initiation complex (43S PIC). Junction of the 60S ribosomal subunit to form the 80S initiation complex is preceded by hydrolysis of the GTP bound to eIF2 and release of an eIF2-GDP binary complex. In order for eIF2 to recycle and catalyze another round of initiation, the GDP bound to eIF2 must exchange with GTP by way of a reaction catalyzed by eIF2B. The sequence is that of Eukaryotic translation initiation factor 2 subunit 2 (EIF2S2) from Bos taurus (Bovine).